The following is a 235-amino-acid chain: MTQTPTNPRERLIVALDVPDVAQASKLVATLDDSVLFYKIGYQLAYAGGLSMAQDLIGAGKKVFIDLKLHDIGNTVASGVASIAKLGATFLTVHAYPQTMKAAVEASRGTGLKILAVTVLTSYDEADLKEAGYSLGVADLVAQRARQAQAIGIDGLVCSAEEAANLRAIVGEGLSLVTPGIRPAGSAVGDQKRVMTPARAIAAGADYLVVGRPIVAATDPKSAANAIVAEIAVAH.

Substrate is bound by residues D17, K39, 66-75, T121, R182, Q191, G211, and R212; that span reads DLKLHDIGNT. K68 (proton donor) is an active-site residue.

It belongs to the OMP decarboxylase family. Type 1 subfamily. As to quaternary structure, homodimer.

The catalysed reaction is orotidine 5'-phosphate + H(+) = UMP + CO2. It functions in the pathway pyrimidine metabolism; UMP biosynthesis via de novo pathway; UMP from orotate: step 2/2. Its function is as follows. Catalyzes the decarboxylation of orotidine 5'-monophosphate (OMP) to uridine 5'-monophosphate (UMP). The polypeptide is Orotidine 5'-phosphate decarboxylase (Afipia carboxidovorans (strain ATCC 49405 / DSM 1227 / KCTC 32145 / OM5) (Oligotropha carboxidovorans)).